A 203-amino-acid polypeptide reads, in one-letter code: Holliday junction branch migration complex subunit RuvA (203 aa).

Residues Met1–Leu63 form a domain I region. The interval Thr64–Asn142 is domain II. Residues Asp143–Asn149 form a flexible linker region. Positions Ile150–Leu203 are domain III.

The protein belongs to the RuvA family. As to quaternary structure, homotetramer. Forms an RuvA(8)-RuvB(12)-Holliday junction (HJ) complex. HJ DNA is sandwiched between 2 RuvA tetramers; dsDNA enters through RuvA and exits via RuvB. An RuvB hexamer assembles on each DNA strand where it exits the tetramer. Each RuvB hexamer is contacted by two RuvA subunits (via domain III) on 2 adjacent RuvB subunits; this complex drives branch migration. In the full resolvosome a probable DNA-RuvA(4)-RuvB(12)-RuvC(2) complex forms which resolves the HJ.

The protein resides in the cytoplasm. The RuvA-RuvB-RuvC complex processes Holliday junction (HJ) DNA during genetic recombination and DNA repair, while the RuvA-RuvB complex plays an important role in the rescue of blocked DNA replication forks via replication fork reversal (RFR). RuvA specifically binds to HJ cruciform DNA, conferring on it an open structure. The RuvB hexamer acts as an ATP-dependent pump, pulling dsDNA into and through the RuvAB complex. HJ branch migration allows RuvC to scan DNA until it finds its consensus sequence, where it cleaves and resolves the cruciform DNA. The protein is Holliday junction branch migration complex subunit RuvA of Rickettsia akari (strain Hartford).